Consider the following 460-residue polypeptide: Kynureninase (460 aa).

Pyridoxal 5'-phosphate is bound by residues Leu127, Thr128, Phe165 to Asp168, Asp249, His252, and Tyr274. Lys275 is subject to N6-(pyridoxal phosphate)lysine. Residues Trp304 and Asn332 each contribute to the pyridoxal 5'-phosphate site.

It belongs to the kynureninase family. In terms of assembly, homodimer. It depends on pyridoxal 5'-phosphate as a cofactor.

It localises to the cytoplasm. The enzyme catalyses L-kynurenine + H2O = anthranilate + L-alanine + H(+). It carries out the reaction 3-hydroxy-L-kynurenine + H2O = 3-hydroxyanthranilate + L-alanine + H(+). It functions in the pathway amino-acid degradation; L-kynurenine degradation; L-alanine and anthranilate from L-kynurenine: step 1/1. It participates in cofactor biosynthesis; NAD(+) biosynthesis; quinolinate from L-kynurenine: step 2/3. In terms of biological role, catalyzes the cleavage of L-kynurenine (L-Kyn) and L-3-hydroxykynurenine (L-3OHKyn) into anthranilic acid (AA) and 3-hydroxyanthranilic acid (3-OHAA), respectively. The polypeptide is Kynureninase (Monosiga brevicollis (Choanoflagellate)).